The sequence spans 167 residues: Thioredoxin-like protein HI_1115 (167 aa).

The chain crosses the membrane as a helical span at residues 10–27 (GLSLFLTFIVITSILDFV). The 138-residue stretch at 30 to 167 (PVVPEEINKI…VRLFFAEFFG (138 aa)) folds into the Thioredoxin domain. A disulfide bridge connects residues Cys-69 and Cys-72.

The protein belongs to the thioredoxin family.

The protein resides in the cell membrane. The sequence is that of Thioredoxin-like protein HI_1115 from Haemophilus influenzae (strain ATCC 51907 / DSM 11121 / KW20 / Rd).